The chain runs to 963 residues: Copalyl diphosphate synthase (963 aa).

Residues 1–539 (MSPMDLQESA…EAYILAALKR (539 aa)) form a type II terpene cyclase (TC) region. The interval 227-292 (ATQWDDECED…FIEKIRSYLH (66 aa)) is substrate binding. Positions 311 and 314 each coordinate Mg(2+). A DXDD motif is present at residues 311–314 (DADD). The short motif at 333 to 341 (AMLKEFEEE) is the NSE/DTE element. Substrate contacts are provided by residues 337 to 341 (EFEEE) and 521 to 522 (VT). The tract at residues 540–659 (AADLPDENAE…SVSVHTDHSD (120 aa)) is linker. Polar residues predominate over residues 627 to 648 (TNGHYVNGTNHETPLTNGISNG). The segment at 627 to 657 (TNGHYVNGTNHETPLTNGISNGDSVSVHTDH) is disordered. The segment at 660–963 (SYYQRSDWTA…KILARMSLEL (304 aa)) is geranylfarnesyl diphosphate synthase (PT). Isopentenyl diphosphate contacts are provided by Lys688, Arg691, and His720. Residues Asp727 and Asp731 each contribute to the Mg(2+) site. Residues 727–731 (DDIQD) carry the DDXXD 1 motif. Arg736 is a binding site for dimethylallyl diphosphate. Arg737 is a binding site for isopentenyl diphosphate. Residues Lys814, Thr815, Gln848, Asn855, Lys865, and Lys875 each contribute to the dimethylallyl diphosphate site. Positions 851–855 (DDYLN) match the DDXXD 2 motif.

This sequence in the N-terminal section; belongs to the terpene synthase family. It in the C-terminal section; belongs to the FPP/GGPP synthase family. Homohexamer. Requires Mg(2+) as cofactor.

It carries out the reaction isopentenyl diphosphate + (2E,6E)-farnesyl diphosphate = (2E,6E,10E)-geranylgeranyl diphosphate + diphosphate. The catalysed reaction is (2E,6E,10E)-geranylgeranyl diphosphate = (+)-copalyl diphosphate. Its function is as follows. Bifunctional terpene synthase that possesses both prenyltransferase and type II terpene cyclase activity, converting isopentenyl diphosphate (IPP) and dimethylallyl diphosphate (DMAPP) into geranylgeranyl diphosphate (GGPP) and further converting GGPP into copalyl diphosphate, respectively. This chain is Copalyl diphosphate synthase, found in Talaromyces verruculosus (Penicillium verruculosum).